The following is a 565-amino-acid chain: Sulfite reductase [NADPH] hemoprotein beta-component (565 aa).

The [4Fe-4S] cluster site is built by Cys429, Cys435, Cys474, and Cys478. Cys478 is a binding site for siroheme.

This sequence belongs to the nitrite and sulfite reductase 4Fe-4S domain family. Alpha(8)-beta(8). The alpha component is a flavoprotein, the beta component is a hemoprotein. Siroheme serves as cofactor. It depends on [4Fe-4S] cluster as a cofactor.

The catalysed reaction is hydrogen sulfide + 3 NADP(+) + 3 H2O = sulfite + 3 NADPH + 4 H(+). It participates in sulfur metabolism; hydrogen sulfide biosynthesis; hydrogen sulfide from sulfite (NADPH route): step 1/1. Functionally, component of the sulfite reductase complex that catalyzes the 6-electron reduction of sulfite to sulfide. This is one of several activities required for the biosynthesis of L-cysteine from sulfate. This chain is Sulfite reductase [NADPH] hemoprotein beta-component, found in Shewanella baltica (strain OS155 / ATCC BAA-1091).